The chain runs to 1370 residues: DNA-directed RNA polymerase subunit beta (1370 aa).

It belongs to the RNA polymerase beta chain family. In terms of assembly, the RNAP catalytic core consists of 2 alpha, 1 beta, 1 beta' and 1 omega subunit. When a sigma factor is associated with the core the holoenzyme is formed, which can initiate transcription.

It carries out the reaction RNA(n) + a ribonucleoside 5'-triphosphate = RNA(n+1) + diphosphate. In terms of biological role, DNA-dependent RNA polymerase catalyzes the transcription of DNA into RNA using the four ribonucleoside triphosphates as substrates. The chain is DNA-directed RNA polymerase subunit beta from Bordetella pertussis (strain Tohama I / ATCC BAA-589 / NCTC 13251).